Here is a 244-residue protein sequence, read N- to C-terminus: UPF0246 protein SGO_1307 (244 aa).

This sequence belongs to the UPF0246 family.

The polypeptide is UPF0246 protein SGO_1307 (Streptococcus gordonii (strain Challis / ATCC 35105 / BCRC 15272 / CH1 / DL1 / V288)).